A 317-amino-acid chain; its full sequence is Glycine--tRNA ligase alpha subunit (317 aa).

It belongs to the class-II aminoacyl-tRNA synthetase family. In terms of assembly, tetramer of two alpha and two beta subunits.

The protein resides in the cytoplasm. It carries out the reaction tRNA(Gly) + glycine + ATP = glycyl-tRNA(Gly) + AMP + diphosphate. This is Glycine--tRNA ligase alpha subunit from Cupriavidus metallidurans (strain ATCC 43123 / DSM 2839 / NBRC 102507 / CH34) (Ralstonia metallidurans).